The following is a 214-amino-acid chain: Small ribosomal subunit protein uS4c (214 aa).

2 stretches are compositionally biased toward basic residues: residues 1–14 (MSRY…KIKR) and 36–46 (LSRPKPKKKSQ). Residues 1–46 (MSRYRGPRVKKIKRLGSLPGLTTKKPPIVVRDPRKLSRPKPKKKSQ) form a disordered region. Residues 92-153 (MRLDNTLFRL…KEKSKALIQN (62 aa)) enclose the S4 RNA-binding domain.

Belongs to the universal ribosomal protein uS4 family. In terms of assembly, part of the 30S ribosomal subunit. Contacts protein S5. The interaction surface between S4 and S5 is involved in control of translational fidelity.

The protein localises to the plastid. The protein resides in the chloroplast. In terms of biological role, one of the primary rRNA binding proteins, it binds directly to 16S rRNA where it nucleates assembly of the body of the 30S subunit. With S5 and S12 plays an important role in translational accuracy. The polypeptide is Small ribosomal subunit protein uS4c (rps4) (Pelargonium hortorum (Common geranium)).